Reading from the N-terminus, the 133-residue chain is Nickel-responsive regulator (133 aa).

Positions 76, 87, 89, and 95 each coordinate Ni(2+).

It belongs to the transcriptional regulatory CopG/NikR family. In terms of assembly, homotetramer. It depends on Ni(2+) as a cofactor.

In terms of biological role, transcriptional repressor of the nikABCDE operon. Is active in the presence of excessive concentrations of intracellular nickel. This chain is Nickel-responsive regulator, found in Escherichia coli O6:K15:H31 (strain 536 / UPEC).